The following is a 315-amino-acid chain: Ribosomal large subunit pseudouridine synthase D (315 aa).

The S4 RNA-binding domain occupies 18-87; the sequence is KRLDQILSKL…LPQNIALNTI (70 aa). Residue Asp139 is part of the active site.

This sequence belongs to the pseudouridine synthase RluA family.

The protein localises to the cytoplasm. The enzyme catalyses uridine(1911/1915/1917) in 23S rRNA = pseudouridine(1911/1915/1917) in 23S rRNA. Responsible for synthesis of pseudouridine from uracil at positions 1911, 1915 and 1917 in 23S ribosomal RNA. The polypeptide is Ribosomal large subunit pseudouridine synthase D (rluD) (Buchnera aphidicola subsp. Schizaphis graminum (strain Sg)).